The chain runs to 562 residues: Phosphoglucomutase-1 (562 aa).

At Met1 the chain carries N-acetylmethionine. Position 16 is an N6-acetyllysine (Lys16). Arg23 contacts alpha-D-glucose 1,6-bisphosphate. A Phosphothreonine modification is found at Thr115. Position 117 (Ser117) interacts with alpha-D-glucose 1,6-bisphosphate. Residue Ser117 is the Phosphoserine intermediate of the active site. Ser117 contributes to the Mg(2+) binding site. Residues Ser117 and Ser134 each carry the phosphoserine modification. Thr185 is modified (phosphothreonine). Ser213 bears the Phosphoserine mark. The Mg(2+) site is built by Asp288, Asp290, and Asp292. Alpha-D-glucose 1,6-bisphosphate contacts are provided by Asp292 and Arg293. Position 349 is an N6-acetyllysine (Lys349). Tyr353 is subject to Phosphotyrosine. Thr357 serves as a coordination point for alpha-D-glucose 1,6-bisphosphate. Ser369 bears the Phosphoserine mark. 3 residues coordinate alpha-D-glucose 1,6-bisphosphate: Glu376, Ser378, and Lys389. At Ser378 the chain carries Phosphoserine. Lys419 carries the N6-succinyllysine modification. Phosphothreonine; by PAK1 is present on Thr467. 2 positions are modified to phosphoserine: Ser485 and Ser505. Residue Thr507 is modified to Phosphothreonine. 2 positions are modified to phosphoserine: Ser509 and Ser541.

Belongs to the phosphohexose mutase family. In terms of assembly, monomer. Mg(2+) is required as a cofactor. Post-translationally, isoform 2 is the major calmodulin-dependent phosphoprotein in junctional skeletal sarcoplasmic reticulum vesicles. Phosphorylation at Thr-467 by PAK1 significantly enhances enzymatic activity.

The protein resides in the cytoplasm. The protein localises to the sarcoplasmic reticulum. It carries out the reaction alpha-D-glucose 1-phosphate = alpha-D-glucose 6-phosphate. It catalyses the reaction O-phospho-L-seryl-[protein] + alpha-D-glucose 1-phosphate = alpha-D-glucose 1,6-bisphosphate + L-seryl-[protein]. The enzyme catalyses alpha-D-glucose 1,6-bisphosphate + L-seryl-[protein] = O-phospho-L-seryl-[protein] + alpha-D-glucose 6-phosphate. With respect to regulation, glucose-1,6-bisphosphate enhances phosphorylation of the active site Ser-117, and thereby increases enzyme activity. Catalyzes the reversible isomerization of alpha-D-glucose 1-phosphate to alpha-D-glucose 6-phosphate. The mechanism proceeds via the intermediate compound alpha-D-glucose 1,6-bisphosphate. This enzyme participates in both the breakdown and synthesis of glucose. This Oryctolagus cuniculus (Rabbit) protein is Phosphoglucomutase-1 (PGM1).